We begin with the raw amino-acid sequence, 390 residues long: Large ribosomal subunit protein mL44 (390 aa).

A mitochondrion-targeting transit peptide spans 1-59; that stretch reads MGIVLKRAIAAGMKPFPNSTWHWSRTIRPFSQHLSSTCFLQQSSRFTSKRYLHLSTLTQ. The RNase III domain maps to 139 to 205; it reads AFVNTVPTNK…LAHIAKYWGI (67 aa). Positions 302-372 constitute a DRBM domain; the sequence is QPTRELAMLC…ATDALMKWYC (71 aa).

Belongs to the ribonuclease III family. Mitochondrion-specific ribosomal protein mL44 subfamily. In terms of assembly, component of the mitochondrial large ribosomal subunit (mt-LSU). Mature yeast 74S mitochondrial ribosomes consist of a small (37S) and a large (54S) subunit. The 37S small subunit contains a 15S ribosomal RNA (15S mt-rRNA) and 34 different proteins. The 54S large subunit contains a 21S rRNA (21S mt-rRNA) and 46 different proteins. mL44 forms a heterodimer with mL57 and stabilizes rRNA expansion segments 1/2 at a membrane-facing protuberance close to the point of attachment of the ribosome to the translocon in the membrane.

It is found in the mitochondrion. In terms of biological role, component of the mitochondrial ribosome (mitoribosome), a dedicated translation machinery responsible for the synthesis of mitochondrial genome-encoded proteins, including at least some of the essential transmembrane subunits of the mitochondrial respiratory chain. The mitoribosomes are attached to the mitochondrial inner membrane and translation products are cotranslationally integrated into the membrane. In Saccharomyces cerevisiae (strain ATCC 204508 / S288c) (Baker's yeast), this protein is Large ribosomal subunit protein mL44 (MRPL3).